Consider the following 178-residue polypeptide: Peptide deformylase 2 (178 aa).

Fe cation contacts are provided by C101 and H143. E144 is a catalytic residue. H147 is a binding site for Fe cation.

The protein belongs to the polypeptide deformylase family. The cofactor is Fe(2+).

The enzyme catalyses N-terminal N-formyl-L-methionyl-[peptide] + H2O = N-terminal L-methionyl-[peptide] + formate. In terms of biological role, removes the formyl group from the N-terminal Met of newly synthesized proteins. Requires at least a dipeptide for an efficient rate of reaction. N-terminal L-methionine is a prerequisite for activity but the enzyme has broad specificity at other positions. The chain is Peptide deformylase 2 from Pseudomonas putida (strain ATCC 47054 / DSM 6125 / CFBP 8728 / NCIMB 11950 / KT2440).